Consider the following 174-residue polypeptide: UPF0664 stress-induced protein C29B12.11c (174 aa).

Residues His147 to Ser174 form a disordered region. A compositionally biased stretch (basic and acidic residues) spans Pro165–Ser174.

Belongs to the UPF0664 family.

The protein localises to the cytoplasm. It is found in the nucleus. The polypeptide is UPF0664 stress-induced protein C29B12.11c (Schizosaccharomyces pombe (strain 972 / ATCC 24843) (Fission yeast)).